Consider the following 213-residue polypeptide: Deoxyribose-phosphate aldolase (213 aa).

The active-site Proton donor/acceptor is the Asp89. The active-site Schiff-base intermediate with acetaldehyde is Lys151. Lys180 serves as the catalytic Proton donor/acceptor.

Belongs to the DeoC/FbaB aldolase family. DeoC type 1 subfamily.

It is found in the cytoplasm. It carries out the reaction 2-deoxy-D-ribose 5-phosphate = D-glyceraldehyde 3-phosphate + acetaldehyde. It functions in the pathway carbohydrate degradation; 2-deoxy-D-ribose 1-phosphate degradation; D-glyceraldehyde 3-phosphate and acetaldehyde from 2-deoxy-alpha-D-ribose 1-phosphate: step 2/2. In terms of biological role, catalyzes a reversible aldol reaction between acetaldehyde and D-glyceraldehyde 3-phosphate to generate 2-deoxy-D-ribose 5-phosphate. This is Deoxyribose-phosphate aldolase from Finegoldia magna (strain ATCC 29328 / DSM 20472 / WAL 2508) (Peptostreptococcus magnus).